The chain runs to 339 residues: D-erythrose-4-phosphate dehydrogenase (339 aa).

NAD(+)-binding positions include 12–13 (RI) and Arg81. Substrate is bound by residues 154 to 156 (SCT), Arg200, 213 to 214 (TK), and Arg236. Cys155 serves as the catalytic Nucleophile. Residue Asn318 coordinates NAD(+).

The protein belongs to the glyceraldehyde-3-phosphate dehydrogenase family. Epd subfamily. In terms of assembly, homotetramer.

It localises to the cytoplasm. The enzyme catalyses D-erythrose 4-phosphate + NAD(+) + H2O = 4-phospho-D-erythronate + NADH + 2 H(+). Its pathway is cofactor biosynthesis; pyridoxine 5'-phosphate biosynthesis; pyridoxine 5'-phosphate from D-erythrose 4-phosphate: step 1/5. Its function is as follows. Catalyzes the NAD-dependent conversion of D-erythrose 4-phosphate to 4-phosphoerythronate. In Escherichia coli O45:K1 (strain S88 / ExPEC), this protein is D-erythrose-4-phosphate dehydrogenase.